The following is a 392-amino-acid chain: MIQGSYRDTWTEVSLDAIHHNVTAFKNHIDHHTKLMAVVKADGYGHGAVEVAQEALTAGADYLAVAILDEAIQLRDAGIDAPLLVLGYTHPDGLKTAIEQQITLTVFTKEDAEQVKIAAELLQKTARIHLKIESGMNRIGIATKEEAVEIAKALHSSFVMLEGAFTHFADADNTDPTYTEMQFHRFNQIISHLRTHCHIPIVHCCNTAATIAYPDMHLDMVRVGIGIYGLYPETHLKELIDLKQAMSLKTKPVYIKTVDQDTAISYGLTFTTERKSTIATMPIGYADGFSRLLSNRGDVIVHAGRAPIVGRICMDQSMIDVTDVENVGLDDVITIFGEPTEGYIAMEEVANLMGTIHYETACLIGKRVPRIYMRQSEAVNYKGLVEKEPVTS.

Residue K40 is the Proton acceptor; specific for D-alanine of the active site. Residue K40 is modified to N6-(pyridoxal phosphate)lysine. Residue R138 participates in substrate binding. Catalysis depends on Y266, which acts as the Proton acceptor; specific for L-alanine. M314 serves as a coordination point for substrate.

This sequence belongs to the alanine racemase family. Requires pyridoxal 5'-phosphate as cofactor.

The enzyme catalyses L-alanine = D-alanine. Its pathway is amino-acid biosynthesis; D-alanine biosynthesis; D-alanine from L-alanine: step 1/1. Functionally, catalyzes the interconversion of L-alanine and D-alanine. May also act on other amino acids. In Oceanobacillus iheyensis (strain DSM 14371 / CIP 107618 / JCM 11309 / KCTC 3954 / HTE831), this protein is Alanine racemase 2 (alr2).